A 786-amino-acid polypeptide reads, in one-letter code: Cas scaffolding protein family member 4 (786 aa).

The SH3 domain maps to 11-73 (PKALLARALY…PANRLQILTE (63 aa)). Residues S200 and S249 each carry the phosphoserine modification. The disordered stretch occupies residues 262-295 (SFAEESRPHALPSSSSTFYNPPSGRSRSLTPQLN). The segment covering 273–295 (PSSSSTFYNPPSGRSRSLTPQLN) has biased composition (polar residues). S305 is modified (phosphoserine). Disordered stretches follow at residues 361–429 (QAGK…SEES) and 612–670 (IQPP…ERKP). Positions 364–373 (KELEKAKEVS) are enriched in basic and acidic residues. Residues 374–391 (ENSAGHNSSWFSRRTTSP) are compositionally biased toward polar residues. Phosphoserine occurs at positions 376 and 390. Over residues 399–427 (SGSSSDSRASIVSSCSTTSTDDSSSSSSE) the composition is skewed to low complexity. The span at 630 to 642 (KQREDEHSSELLK) shows a compositional bias: basic and acidic residues.

The protein belongs to the CAS family. Interacts (via SH3 domain) with PTK2/FAK1 (via C-terminus). Phosphorylated on tyrosines by SRC. As to expression, expressed abundantly in lung and spleen. Also highly expressed in ovarian and leukemia cell lines.

The protein resides in the cytoplasm. It localises to the cytoskeleton. It is found in the cell junction. The protein localises to the focal adhesion. Docking protein that plays a role in tyrosine kinase-based signaling related to cell adhesion and cell spreading. Regulates PTK2/FAK1 activity, focal adhesion integrity, and cell spreading. In Homo sapiens (Human), this protein is Cas scaffolding protein family member 4 (CASS4).